Here is a 253-residue protein sequence, read N- to C-terminus: Blue-light photoreceptor (253 aa).

The PAS domain occupies 6–79 (QFDVILKALN…AKIRHAINEK (74 aa)). C56 is modified (S-4a-FMN cysteine). One can recognise a PAC domain in the interval 80–133 (STANVLLKNYRKDGTSFMNELTIEPIYDDHEHLYFVGIQKDVTTEHDYQLELEK). An STAS domain is found at 142 to 253 (STPIVPIKEN…STIKEALQFY (112 aa)).

Post-translationally, FMN binds covalently to cysteine after exposure to blue light and this bond is spontaneously broken in the dark.

Exhibits the same spectroscopical features and blue-light induced photochemistry as plants phototropins, with the reversible formation of a blue-shifted photoproduct, assigned to an FMN-cysteine thiol adduct. Positive regulator in the activation of the general stress transcription factor sigma-B. This is Blue-light photoreceptor from Listeria monocytogenes serovar 1/2a (strain ATCC BAA-679 / EGD-e).